The primary structure comprises 53 residues: Snake venom serine protease LmrSP-4 (53 aa).

Cys-26 and Cys-42 form a disulfide bridge. His-41 (charge relay system) is an active-site residue.

As to quaternary structure, monomer. In terms of processing, N-glycosylated. Expressed by the venom gland.

It is found in the secreted. Its activity is regulated as follows. Inhibited by the small molecule serine protease inhibitors phenylmethylsulfonyl fluoride (PMSF) and benzamidine. In terms of biological role, snake venom serine protease that has fibrinogenolytic activity. Hydrolyzes the alpha-chain of fibrinogen (FGA), without affecting the beta- and the gamma-chains. Also displays hydrolytic activity towards S-2302 (plasma kallikrein substrate) and S-2251 (substrate for plasmin), but has no hydrolytic activity with S-2238 (thrombin substrate) or S-2222 (factor Xa). In Lachesis muta rhombeata (Bushmaster), this protein is Snake venom serine protease LmrSP-4.